The following is a 419-amino-acid chain: D-amino acid dehydrogenase (419 aa).

3 to 17 contacts FAD; sequence VIVLGSGVIGVASAY.

It belongs to the DadA oxidoreductase family. It depends on FAD as a cofactor.

The catalysed reaction is a D-alpha-amino acid + A + H2O = a 2-oxocarboxylate + AH2 + NH4(+). It participates in amino-acid degradation; D-alanine degradation; NH(3) and pyruvate from D-alanine: step 1/1. In terms of biological role, oxidative deamination of D-amino acids. The protein is D-amino acid dehydrogenase of Acinetobacter baylyi (strain ATCC 33305 / BD413 / ADP1).